A 410-amino-acid polypeptide reads, in one-letter code: 2,3-bisphosphoglycerate-independent phosphoglycerate mutase (410 aa).

Belongs to the BPG-independent phosphoglycerate mutase family. A-PGAM subfamily.

It catalyses the reaction (2R)-2-phosphoglycerate = (2R)-3-phosphoglycerate. Its pathway is carbohydrate degradation; glycolysis; pyruvate from D-glyceraldehyde 3-phosphate: step 3/5. Its function is as follows. Catalyzes the interconversion of 2-phosphoglycerate and 3-phosphoglycerate. In Pyrococcus abyssi (strain GE5 / Orsay), this protein is 2,3-bisphosphoglycerate-independent phosphoglycerate mutase.